The sequence spans 1121 residues: Piwi-like protein ergo-1 (1121 aa).

A compositionally biased stretch (gly residues) spans 1–14 (MSYNNGGGGGGGGY). Residues 1–134 (MSYNNGGGGG…GNRGGGGGRV (134 aa)) are disordered. Composition is skewed to basic and acidic residues over residues 15–29 (RNDR…DRQN) and 40–77 (YNDD…DRRG). The segment covering 99–112 (GSNQRNDNYGNNRG) has biased composition (polar residues). Gly residues predominate over residues 125–134 (GNRGGGGGRV). Positions 426–534 (VMTQILTKMT…MPLELVSYIV (109 aa)) constitute a PAZ domain. The region spanning 774–1081 (NVLKYLADNK…AAKRAKETLD (308 aa)) is the Piwi domain.

Belongs to the argonaute family. Piwi subfamily. As to quaternary structure, interacts with rde-12. Interacts with rde-10. As to expression, highly expressed in the germline in hermaphrodites.

The protein resides in the cytoplasm. Argonaute protein required for gene silencing in the endogenous RNA interference (RNAi) pathway. Involved in the 26G RNAi pathway and associates with both unmethylated and methylated 26G small interfering RNAs (26G-siRNAs), which are a class of 26 nucleotide siRNAs that possess a guanine residue at the 5'-end. Associated 26G-siRNAs are methylated by the methyltransferase henn-1, which stabilizes the siRNAs. Association with 26G-siRNAs is required for the biogenesis of secondary 22G-siRNAs (a class of 22 nucleotide siRNAs that possess a triphosphorylated guanine residue at the 5'-end). May be involved in passenger strand cleavage of target 26G-siRNAs. The chain is Piwi-like protein ergo-1 from Caenorhabditis elegans.